Reading from the N-terminus, the 55-residue chain is Large ribosomal subunit protein bL33 (55 aa).

The protein belongs to the bacterial ribosomal protein bL33 family.

The polypeptide is Large ribosomal subunit protein bL33 (Rhodopseudomonas palustris (strain BisB5)).